Here is a 143-residue protein sequence, read N- to C-terminus: Anti-sigma F factor (143 aa).

It belongs to the anti-sigma-factor family.

It carries out the reaction L-seryl-[protein] + ATP = O-phospho-L-seryl-[protein] + ADP + H(+). It catalyses the reaction L-threonyl-[protein] + ATP = O-phospho-L-threonyl-[protein] + ADP + H(+). Its function is as follows. Binds to sigma F and blocks its ability to form an RNA polymerase holoenzyme (E-sigma F). Phosphorylates SpoIIAA on a serine residue. This phosphorylation may enable SpoIIAA to act as an anti-anti-sigma factor that counteracts SpoIIAB and thus releases sigma F from inhibition. The sequence is that of Anti-sigma F factor from Clostridium botulinum (strain Alaska E43 / Type E3).